Reading from the N-terminus, the 441-residue chain is MTTTIRHFSSGSIKGSSGLAGGSSRSCRVSGSLGGGSCRLGSAGGLGSGLGGSSYSSCYSFGSGGGYGSGGYVSGGYGGGFGGVDGLLVGGEKATMQNLNDRLASYLDKVRALEEANTELELKIRDWYQKQAPGPAPDYSSYFKTIEDLRNKIHTATVDNANLLLQIDNARLAADDFRTKFETEQALRVSVEADINGLRRVLDELTLARADLEMQIENLKEELAYLRKNHEEEMKALRGQVGGEINVEMDAAPGVDLSRILNEMRDQYEKMAEKNRKDAEDWFFSKTEELNREVATNSELVQSGKSEISELRRTLQALEIELQSQLSMKASLEGSLAETENRYCMQLSQIQGLIGSVEEQLAQLRCEMEQQNQEYKILLDVKTRLEQEIATYRRLLEGEDAHLTQYKTKEPVTTRQVRTIVEEVQDGRVISSREQVHQTSH.

Residues 1-23 form a disordered region; it reads MTTTIRHFSSGSIKGSSGLAGGS. A head region spans residues 1–91; the sequence is MTTTIRHFSS…GGVDGLLVGG (91 aa). Positions 9–23 are enriched in low complexity; that stretch reads SSGSIKGSSGLAGGS. Ser-12 bears the Phosphoserine mark. Residue Lys-14 forms a Glycyl lysine isopeptide (Lys-Gly) (interchain with G-Cter in SUMO1); alternate linkage. Lys-14 participates in a covalent cross-link: Glycyl lysine isopeptide (Lys-Gly) (interchain with G-Cter in SUMO2); alternate. 4 positions are modified to phosphoserine: Ser-24, Ser-30, Ser-32, and Ser-37. Ser-42 is modified (phosphoserine; by RPS6KA1). The coil 1A stretch occupies residues 92 to 128; the sequence is EKATMQNLNDRLASYLDKVRALEEANTELELKIRDWY. The region spanning 92–403 is the IF rod domain; that stretch reads EKATMQNLND…RLLEGEDAHL (312 aa). A Phosphothreonine modification is found at Thr-118. The interval 129 to 146 is linker 1; the sequence is QKQAPGPAPDYSSYFKTI. Positions 147–238 are coil 1B; sequence EDLRNKIHTA…NHEEEMKALR (92 aa). The segment at 239 to 258 is linker 12; sequence GQVGGEINVEMDAAPGVDLS. A coil 2 region spans residues 259–400; that stretch reads RILNEMRDQY…TYRRLLEGED (142 aa). A Glycyl lysine isopeptide (Lys-Gly) (interchain with G-Cter in SUMO2) cross-link involves residue Lys-286. At Thr-287 the chain carries Phosphothreonine. The residue at position 331 (Ser-331) is a Phosphoserine. A tail region spans residues 401 to 441; that stretch reads AHLTQYKTKEPVTTRQVRTIVEEVQDGRVISSREQVHQTSH. Glycyl lysine isopeptide (Lys-Gly) (interchain with G-Cter in SUMO1); alternate cross-links involve residues Lys-407 and Lys-409. Residues Lys-407 and Lys-409 each participate in a glycyl lysine isopeptide (Lys-Gly) (interchain with G-Cter in SUMO2); alternate cross-link.

Belongs to the intermediate filament family. As to quaternary structure, heterodimer of a type I and a type II keratin. KRT17 associates with KRT6 isomers (KRT6A or KRT6B). Interacts with TRADD and SFN. In terms of processing, phosphorylation at Ser-42 occurs in a growth- and stress-dependent fashion in skin keratinocytes, it has no effect on filament organization.

It is found in the cytoplasm. Functionally, type I keratin involved in the formation and maintenance of various skin appendages, specifically in determining shape and orientation of hair. Required for the correct growth of hair follicles, in particular for the persistence of the anagen (growth) state. Modulates the function of TNF-alpha in the specific context of hair cycling. Regulates protein synthesis and epithelial cell growth through binding to the adapter protein SFN and by stimulating Akt/mTOR pathway. Involved in tissue repair. May be a marker of basal cell differentiation in complex epithelia and therefore indicative of a certain type of epithelial 'stem cells'. Acts as a promoter of epithelial proliferation by acting a regulator of immune response in skin: promotes Th1/Th17-dominated immune environment contributing to the development of basaloid skin tumors. May act as an autoantigen in the immunopathogenesis of psoriasis, with certain peptide regions being a major target for autoreactive T-cells and hence causing their proliferation. In Bos taurus (Bovine), this protein is Keratin, type I cytoskeletal 17.